The primary structure comprises 483 residues: MVQNRAIFCFLSTIKSEETMTSESQPQVTQTRKFFGTDGIRGMANIHPMTPDLVLKLGRAAGHVFRVGDKRHTVIIGKDTRLSGYMFESALLAGLTSMGIHCLQVGPLPTPAIAFLTRALRADAGIMISASHNPFHDNGIKFFGPNGMKLPDELELEIERVLLSDEDLPMPTPHHLGRAHRIDDALGRYIEFAKTSFPKDLRLDGLRVVVDCAHGAAYKVAPAVLWELGAEVVTLGNHPNGTNINDGVGSLYPQEMVKRVQEVRADVGIAFDGDADRVVICDERGEILDGDVILAMSALEMKRKGVLRGDGVVATVMSNLGLERALAAEGLTLARTKVGDRYVLEHMLAHGFNLGGEQSGHLIFLDHNTTGDGLISALSVLALMTTQAQPLSKLANVMQRVPQVLQNVTIARGSDPMDDSRVVAAIAEAEAQLGTRGRILVRKSGTEPKVRVMVEGDDTAHITALASGVCEAIKRASNGFGEG.

The active-site Phosphoserine intermediate is Ser131. Mg(2+) is bound by residues Ser131, Asp272, Asp274, and Asp276. Phosphoserine is present on Ser131.

Belongs to the phosphohexose mutase family. Mg(2+) is required as a cofactor. Post-translationally, activated by phosphorylation.

The enzyme catalyses alpha-D-glucosamine 1-phosphate = D-glucosamine 6-phosphate. Its function is as follows. Catalyzes the conversion of glucosamine-6-phosphate to glucosamine-1-phosphate. This is Phosphoglucosamine mutase from Magnetococcus marinus (strain ATCC BAA-1437 / JCM 17883 / MC-1).